The sequence spans 189 residues: Ras-like protein 1 (189 aa).

Residue 10–17 (GAGGVGKS) coordinates GTP. The Effector region signature appears at 32-40 (YDPTIEDSY). Residues 57–61 (DTAGQ) and 116–119 (NKCD) each bind GTP. Cysteine methyl ester is present on Cys-186. Residue Cys-186 is the site of S-geranylgeranyl cysteine attachment. Positions 187–189 (KML) are cleaved as a propeptide — removed in mature form.

It belongs to the small GTPase superfamily. Ras family.

It is found in the cell membrane. The enzyme catalyses GTP + H2O = GDP + phosphate + H(+). Its activity is regulated as follows. Alternates between an inactive form bound to GDP and an active form bound to GTP. Activated by a guanine nucleotide-exchange factor (GEF) and inactivated by a GTPase-activating protein (GAP). Functionally, ras proteins bind GDP/GTP and possess intrinsic GTPase activity. Plays a role in eye development by regulating cell growth, survival of postmitotic ommatidial cells and differentiation of photoreceptor cells. During larval development, mediates Ptth/tor signaling leading to the production of ecdysone, a hormone required for the initiation of metamorphosis. This Drosophila grimshawi (Hawaiian fruit fly) protein is Ras-like protein 1.